The sequence spans 80 residues: Regulatory protein HrpD6 (80 aa).

Involved in the regulation of several genes of the hrp-hrc-hpa cluster, which encodes a type III secretion system (T3SS). Upregulates the expression of hpa2, hpa1 and hpaB and partially controls the expression of hrcC and hrcT. Controls the secretion of the T3SS TAL effector AvrXa27. Also regulates the expression of several HrpX-regulated protein (Xrp) genes. Has no influence on hrpG or hrpX expression. The protein is Regulatory protein HrpD6 of Xanthomonas oryzae pv. oryzicola.